Consider the following 64-residue polypeptide: Large ribosomal subunit protein uL30 (64 aa).

Belongs to the universal ribosomal protein uL30 family. Part of the 50S ribosomal subunit.

The polypeptide is Large ribosomal subunit protein uL30 (Desulforudis audaxviator (strain MP104C)).